Reading from the N-terminus, the 1074-residue chain is Phospholipase D1 (1074 aa).

The region spanning 81–212 (IKAQVLEVER…TEFLDVSQLS (132 aa)) is the PX domain. In terms of domain architecture, PH spans 219-328 (PKGLEGMIMK…WGGAIEEFIR (110 aa)). Residues cysteine 240 and cysteine 241 are each lipidated (S-palmitoyl cysteine). In terms of domain architecture, PLD phosphodiesterase 1 spans 459–486 (YLWAHHEKLVIIDQSVAFVGGIDLAYGR). The catalytic stretch occupies residues 463–928 (HHEKLVIIDQ…MLGKRDSEMA (466 aa)). Serine 499, serine 561, and serine 629 each carry phosphoserine. Residues 891-918 (ELIYVHSKLLIADDNTVIIGSANINDRS) enclose the PLD phosphodiesterase 2 domain.

This sequence belongs to the phospholipase D family. As to quaternary structure, interacts with PIP5K1B. As to expression, expressed in kidney, lung, and at a much lower levels, in brain, liver, heart, testis and spleen.

The protein resides in the cytoplasm. It is found in the perinuclear region. The protein localises to the endoplasmic reticulum membrane. Its subcellular location is the golgi apparatus membrane. It localises to the late endosome membrane. It catalyses the reaction a 1,2-diacyl-sn-glycero-3-phosphocholine + H2O = a 1,2-diacyl-sn-glycero-3-phosphate + choline + H(+). It carries out the reaction ethanol + a 1,2-diacyl-sn-glycero-3-phosphocholine = 1,2-diacyl-sn-glycero-3-phosphoethanol + choline. The enzyme catalyses 1,2-dihexadecanoyl-sn-glycero-3-phosphocholine + H2O = 1,2-dihexadecanoyl-sn-glycero-3-phosphate + choline + H(+). Its activity is regulated as follows. Stimulated by phosphatidylinositol 4,5-bisphosphate and phosphatidylinositol 3,4,5-trisphosphate, activated by the phosphokinase C-alpha, by the ADP-ribosylation factor-1 (ARF-1), and to a lesser extent by GTP-binding proteins: RHO A, RAC-1 and CDC42. Inhibited by oleate. Functionally, function as phospholipase selectivefor phosphatidylcholine. Implicated as a critical step in numerous cellular pathways, including signal transduction, membrane trafficking, and the regulation of mitosis. May be involved in the regulation of perinuclear intravesicular membrane traffic. This Mus musculus (Mouse) protein is Phospholipase D1.